The chain runs to 328 residues: 2,3-diketo-L-gulonate-binding periplasmic protein YiaO (328 aa).

A signal peptide spans 1–24; it reads MKLRSVTYALFIAGLAAFSTSSLA.

The complex comprises the extracytoplasmic solute receptor protein YiaO, and the two transmembrane proteins YiaM and YiaN.

The protein resides in the periplasm. Part of the tripartite ATP-independent periplasmic (TRAP) transport system YiaMNO involved in the uptake of 2,3-diketo-L-gulonate. This protein specifically binds 2,3-diketo-L-gulonate. Is not able to bind either L-ascorbate or dehydroascorbate. This is 2,3-diketo-L-gulonate-binding periplasmic protein YiaO (yiaO) from Escherichia coli (strain K12).